Consider the following 240-residue polypeptide: 2-C-methyl-D-erythritol 4-phosphate cytidylyltransferase (240 aa).

It belongs to the IspD/TarI cytidylyltransferase family. IspD subfamily.

It catalyses the reaction 2-C-methyl-D-erythritol 4-phosphate + CTP + H(+) = 4-CDP-2-C-methyl-D-erythritol + diphosphate. Its pathway is isoprenoid biosynthesis; isopentenyl diphosphate biosynthesis via DXP pathway; isopentenyl diphosphate from 1-deoxy-D-xylulose 5-phosphate: step 2/6. Its function is as follows. Catalyzes the formation of 4-diphosphocytidyl-2-C-methyl-D-erythritol from CTP and 2-C-methyl-D-erythritol 4-phosphate (MEP). The chain is 2-C-methyl-D-erythritol 4-phosphate cytidylyltransferase from Chlorobium luteolum (strain DSM 273 / BCRC 81028 / 2530) (Pelodictyon luteolum).